Reading from the N-terminus, the 208-residue chain is Large ribosomal subunit protein uL3 (208 aa).

A disordered region spans residues 123–147; that stretch reads RHGQSRGPMAHGSRYHRRPGSMGPV.

Belongs to the universal ribosomal protein uL3 family. As to quaternary structure, part of the 50S ribosomal subunit. Forms a cluster with proteins L14 and L19.

Its function is as follows. One of the primary rRNA binding proteins, it binds directly near the 3'-end of the 23S rRNA, where it nucleates assembly of the 50S subunit. This is Large ribosomal subunit protein uL3 from Streptococcus uberis (strain ATCC BAA-854 / 0140J).